A 356-amino-acid chain; its full sequence is Phosphate acyltransferase (356 aa).

It belongs to the PlsX family. Homodimer. Probably interacts with PlsY.

The protein resides in the cytoplasm. The catalysed reaction is a fatty acyl-[ACP] + phosphate = an acyl phosphate + holo-[ACP]. The protein operates within lipid metabolism; phospholipid metabolism. Catalyzes the reversible formation of acyl-phosphate (acyl-PO(4)) from acyl-[acyl-carrier-protein] (acyl-ACP). This enzyme utilizes acyl-ACP as fatty acyl donor, but not acyl-CoA. This chain is Phosphate acyltransferase, found in Bartonella henselae (strain ATCC 49882 / DSM 28221 / CCUG 30454 / Houston 1) (Rochalimaea henselae).